Here is a 393-residue protein sequence, read N- to C-terminus: Synaptic vesicle membrane protein VAT-1 homolog (393 aa).

A disordered region spans residues 1–40 (MSDEREVAEAATGEDASSPPPKTEAASDPQHPAASEGAAA). At serine 2 the chain carries N-acetylserine. A phosphoserine mark is found at serine 2, serine 18, serine 27, serine 35, and serine 44.

This sequence belongs to the zinc-containing alcohol dehydrogenase family. Quinone oxidoreductase subfamily. In terms of tissue distribution, expressed in brain. Also expressed in glioblastoma cells.

The protein localises to the cytoplasm. It is found in the mitochondrion outer membrane. Functionally, possesses ATPase activity. Plays a part in calcium-regulated keratinocyte activation in epidermal repair mechanisms. Has no effect on cell proliferation. Negatively regulates mitochondrial fusion in cooperation with mitofusin proteins (MFN1-2). This chain is Synaptic vesicle membrane protein VAT-1 homolog (VAT1), found in Homo sapiens (Human).